The following is a 68-amino-acid chain: TxMMSK-03 (68 aa).

The signal sequence occupies residues 1-19 (MSKLGALLIICLLLFPLTA). Residues 20–50 (VPMDGDQPADRPAERMQDDISFEQHPMFDAT) constitute a propeptide that is removed on maturation. Cystine bridges form between C53–C67, C54–C63, and C59–C66. P65 bears the 4-hydroxyproline; partial mark.

Post-translationally, contains 3 disulfide bonds. In terms of tissue distribution, expressed by the venom duct. Both hydroxylated and non-hydroxylated forms are mostly and only present in part 2 (proximal of the venom bulb) of the venom duct, respectively.

It localises to the secreted. This is TxMMSK-03 from Conus textile (Cloth-of-gold cone).